The following is a 200-amino-acid chain: Coiled-coil domain-containing protein 28B (200 aa).

Position 1 is an N-acetylmethionine (Met-1). The segment covering 1–10 (MDDKKKKRSP) has biased composition (basic residues). The segment at 1-49 (MDDKKKKRSPKPCLAQPAQAPGTLRRVPVPTSHSGSLALGLPHLPSPKQ) is disordered. Phosphoserine occurs at positions 46 and 115. Over residues 141–152 (EEEDDEEEEDGV) the composition is skewed to acidic residues. Positions 141-164 (EEEDDEEEEDGVTEGLPEEQKKTM) are disordered. The stretch at 158-183 (EEQKKTMADRNLDQLLSNLEDLSNSI) forms a coiled coil.

In terms of assembly, interacts with BBS1, BBS2, BBS4, BBS5, BBS6, BBS7 and TTC8/BBS8. Interacts with MAPKAP1/SIN1 isoform 1 and RICTOR.

It is found in the cytoplasm. It localises to the cytoskeleton. Its subcellular location is the microtubule organizing center. The protein localises to the centrosome. Involved in ciliogenesis. Regulates cilia length through its interaction with MAPKAP1/SIN1 but independently of mTORC2 complex. Modulates mTORC2 complex assembly and function, possibly enhances AKT1 phosphorylation. Does not seem to modulate assembly and function of mTORC1 complex. The protein is Coiled-coil domain-containing protein 28B (CCDC28B) of Homo sapiens (Human).